A 625-amino-acid polypeptide reads, in one-letter code: Folylpolyglutamate synthase (625 aa).

141–144 (GKGS) lines the ATP pocket. Mg(2+) contacts are provided by Ser165, Glu234, and His262. Positions 384 and 414 each coordinate ATP.

This sequence belongs to the folylpolyglutamate synthase family. The cofactor is a monovalent cation.

The protein resides in the mitochondrion inner membrane. The protein localises to the mitochondrion matrix. It catalyses the reaction (6S)-5,6,7,8-tetrahydrofolyl-(gamma-L-Glu)(n) + L-glutamate + ATP = (6S)-5,6,7,8-tetrahydrofolyl-(gamma-L-Glu)(n+1) + ADP + phosphate + H(+). It participates in cofactor biosynthesis; tetrahydrofolylpolyglutamate biosynthesis. Functionally, catalyzes conversion of folates to polyglutamate derivatives allowing concentration of folate compounds in the cell and the intracellular retention of these cofactors, which are important substrates for most of the folate-dependent enzymes that are involved in one-carbon transfer reactions involved in purine, pyrimidine and amino acid synthesis. Essential for organellar and whole-plant folate homeostasis. This chain is Folylpolyglutamate synthase, found in Arabidopsis thaliana (Mouse-ear cress).